We begin with the raw amino-acid sequence, 134 residues long: Small ribosomal subunit protein uS8c (134 aa).

It belongs to the universal ribosomal protein uS8 family. In terms of assembly, part of the 30S ribosomal subunit.

Its subcellular location is the plastid. It localises to the chloroplast. In terms of biological role, one of the primary rRNA binding proteins, it binds directly to 16S rRNA central domain where it helps coordinate assembly of the platform of the 30S subunit. This Arabis hirsuta (Hairy rock-cress) protein is Small ribosomal subunit protein uS8c (rps8).